The following is a 430-amino-acid chain: Protein translocase subunit SecY (430 aa).

10 consecutive transmembrane segments (helical) span residues 18 to 38 (VIFT…PVPG), 67 to 87 (FSIF…MQLL), 118 to 138 (IVLG…FFPG), 145 to 165 (VSVY…LMWL), 177 to 197 (GISI…LNLI), 213 to 233 (IVVI…VIFV), 270 to 290 (VIPV…AGLF), 309 to 329 (PIGM…YTFI), 369 to 389 (FVGS…IKFA), and 390 to 410 (DLPQ…GVAL).

It belongs to the SecY/SEC61-alpha family. Component of the Sec protein translocase complex. Heterotrimer consisting of SecY, SecE and SecG subunits. The heterotrimers can form oligomers, although 1 heterotrimer is thought to be able to translocate proteins. Interacts with the ribosome. Interacts with SecDF, and other proteins may be involved. Interacts with SecA.

It localises to the cell membrane. Its function is as follows. The central subunit of the protein translocation channel SecYEG. Consists of two halves formed by TMs 1-5 and 6-10. These two domains form a lateral gate at the front which open onto the bilayer between TMs 2 and 7, and are clamped together by SecE at the back. The channel is closed by both a pore ring composed of hydrophobic SecY resides and a short helix (helix 2A) on the extracellular side of the membrane which forms a plug. The plug probably moves laterally to allow the channel to open. The ring and the pore may move independently. The protein is Protein translocase subunit SecY of Halalkalibacterium halodurans (strain ATCC BAA-125 / DSM 18197 / FERM 7344 / JCM 9153 / C-125) (Bacillus halodurans).